We begin with the raw amino-acid sequence, 257 residues long: Imidazole glycerol phosphate synthase subunit HisF (257 aa).

Active-site residues include D11 and D130.

This sequence belongs to the HisA/HisF family. As to quaternary structure, heterodimer of HisH and HisF.

Its subcellular location is the cytoplasm. The enzyme catalyses 5-[(5-phospho-1-deoxy-D-ribulos-1-ylimino)methylamino]-1-(5-phospho-beta-D-ribosyl)imidazole-4-carboxamide + L-glutamine = D-erythro-1-(imidazol-4-yl)glycerol 3-phosphate + 5-amino-1-(5-phospho-beta-D-ribosyl)imidazole-4-carboxamide + L-glutamate + H(+). It participates in amino-acid biosynthesis; L-histidine biosynthesis; L-histidine from 5-phospho-alpha-D-ribose 1-diphosphate: step 5/9. IGPS catalyzes the conversion of PRFAR and glutamine to IGP, AICAR and glutamate. The HisF subunit catalyzes the cyclization activity that produces IGP and AICAR from PRFAR using the ammonia provided by the HisH subunit. The chain is Imidazole glycerol phosphate synthase subunit HisF from Shewanella baltica (strain OS155 / ATCC BAA-1091).